The following is a 448-amino-acid chain: UDP-glucose 6-dehydrogenase (448 aa).

NAD(+)-binding positions include 2–19, V11, D30, K35, T121, and E152; that span reads NITF…GIIM. Residues 148-152, K204, N208, 249-253, and G257 each bind substrate; these read EFLRE and FLNAG. C260 acts as the Nucleophile in catalysis. K263 lines the NAD(+) pocket. K321 contacts substrate. Residue R328 coordinates NAD(+).

This sequence belongs to the UDP-glucose/GDP-mannose dehydrogenase family.

The catalysed reaction is UDP-alpha-D-glucose + 2 NAD(+) + H2O = UDP-alpha-D-glucuronate + 2 NADH + 3 H(+). It participates in nucleotide-sugar biosynthesis; UDP-alpha-D-glucuronate biosynthesis; UDP-alpha-D-glucuronate from UDP-alpha-D-glucose: step 1/1. This chain is UDP-glucose 6-dehydrogenase (udg), found in Rickettsia felis (strain ATCC VR-1525 / URRWXCal2) (Rickettsia azadi).